The chain runs to 486 residues: Receptor-interacting serine/threonine-protein kinase 3 (486 aa).

S2 bears the Phosphoserine mark. The Protein kinase domain maps to 22–292; it reads LKKLEFVGKG…DCEPKTNEVY (271 aa). ATP-binding positions include 28-36 and K51; that span reads VGKGGFGVV. D143 functions as the Proton acceptor in the catalytic mechanism. S165 is subject to Phosphoserine. T187 carries the post-translational modification Phosphothreonine. S204 bears the Phosphoserine; by autocatalysis mark. T231 is modified (phosphothreonine; by autocatalysis). S232 is modified (phosphoserine; by autocatalysis). At T257 the chain carries Phosphothreonine. Phosphoserine occurs at positions 304 and 326. Residues 312 to 333 are disordered; that stretch reads QHRSSGRNLSAREPSQRGTEMD. T338 carries the post-translational modification Phosphothreonine. The tract at residues 349–388 is disordered; it reads LEEPSGPVPGKCPERQAQDTSVGPATPARTSSDPVAGTPQ. Residues S353, S369, and S380 each carry the phosphoserine modification. The span at 366 to 381 shows a compositional bias: polar residues; sequence QDTSVGPATPARTSSD. Position 392 is a phosphothreonine (T392). Positions 440–461 match the RIP homotypic interaction motif (RHIM) motif; it reads LVFNNCSEVQIGNYNSLVAPPR. The disordered stretch occupies residues 462–486; that stretch reads TTASSSAKYDQAQFGRGRGWQPFHK. R477 carries the omega-N-methylarginine modification.

This sequence belongs to the protein kinase superfamily. TKL Ser/Thr protein kinase family. Interacts (via RIP homotypic interaction motif) with RIPK1 (via RIP homotypic interaction motif); this interaction induces RIPK1 phosphorylation and formation of a RIPK1-RIPK3 necrosis-inducing complex. Interacts with MLKL; the interaction is direct and triggers necroptosis. Interacts with ZBP1 (via RIP homotypic interaction motif); interaction with ZBP1 activates RIPK3, triggering necroptosis. Upon TNF-induced necrosis, the RIPK1-RIPK3 dimer further interacts with PGAM5 and MLKL; the formation of this complex leads to PGAM5 phosphorylation and increase in PGAM5 phosphatase activity. Binds TRAF2 and is recruited to the TNFR-1 signaling complex. Interacts with PYGL, GLUL and GLUD1; these interactions result in activation of these metabolic enzymes. Interacts with BIRC2/c-IAP1, BIRC3/c-IAP2 and XIAP/BIRC4. Interacts with ARHGEF2. Interacts with PELI1 (via atypical FHA domain); the phosphorylated form at Thr-187 binds preferentially to PELI1. Interacts with BUB1B, TRAF2 and STUB1. Interacts with CASP6. Component of the AIM2 PANoptosome complex, a multiprotein complex that drives inflammatory cell death (PANoptosis). In terms of assembly, (Microbial infection) Interacts (via RIP homotypic interaction motif) with murid herpesvirus protein RIR1; this interaction disrupts RIP3-RIP1 interactions characteristic of TNF-alpha induced necroptosis, thereby suppressing this death pathway. RIPK1 and RIPK3 undergo reciprocal auto- and trans-phosphorylation. Autophosphorylated following interaction with ZBP1. Phosphorylation of Ser-204 plays a role in the necroptotic function of RIPK3. Autophosphorylates at Thr-231 and Ser-232 following activation by ZBP1: phosphorylation at these sites is a hallmark of necroptosis and is required for binding MLKL. Phosphorylation at Thr-187 is important for its kinase activity, interaction with PELI1 and for its ability to mediate TNF-induced necroptosis. Post-translationally, polyubiquitinated with 'Lys-48' and 'Lys-63'-linked chains by BIRC2/c-IAP1 and BIRC3/c-IAP2, leading to activation of NF-kappa-B. Ubiquitinated by STUB1 leading to its subsequent proteasome-dependent degradation. In terms of tissue distribution, expressed in embryo and in adult spleen, liver, testis, heart, brain and lung.

The protein localises to the cytoplasm. It localises to the cytosol. Its subcellular location is the nucleus. It carries out the reaction L-seryl-[protein] + ATP = O-phospho-L-seryl-[protein] + ADP + H(+). The enzyme catalyses L-threonyl-[protein] + ATP = O-phospho-L-threonyl-[protein] + ADP + H(+). With respect to regulation, activity is stimulated by ZBP1, which senses double-stranded Z-RNA structures. RIPK3-dependent necroptosis is inhibited by RIPK1: RIPK1 prevents the ZBP1-induced activation of RIPK3 via FADD-mediated recruitment of CASP8, which cleaves RIPK1 and limits TNF-induced necroptosis. Inhibited by type II inhibitor 1-(4-fluorophenyl)-N-[3-fluoro-4-(1H-pyrrolo[2,3-b]pyridin-4-yloxy)phenyl]-2-oxo-1,2-dihydropyridine-3-carboxamide. Functionally, serine/threonine-protein kinase that activates necroptosis and apoptosis, two parallel forms of cell death. Necroptosis, a programmed cell death process in response to death-inducing TNF-alpha family members, is triggered by RIPK3 following activation by ZBP1. Activated RIPK3 forms a necrosis-inducing complex and mediates phosphorylation of MLKL, promoting MLKL localization to the plasma membrane and execution of programmed necrosis characterized by calcium influx and plasma membrane damage. In addition to TNF-induced necroptosis, necroptosis can also take place in the nucleus in response to orthomyxoviruses infection: following ZBP1 activation, which senses double-stranded Z-RNA structures, nuclear RIPK3 catalyzes phosphorylation and activation of MLKL, promoting disruption of the nuclear envelope and leakage of cellular DNA into the cytosol. Also regulates apoptosis: apoptosis depends on RIPK1, FADD and CASP8, and is independent of MLKL and RIPK3 kinase activity. Phosphorylates RIPK1: RIPK1 and RIPK3 undergo reciprocal auto- and trans-phosphorylation. In some cell types, also able to restrict viral replication by promoting cell death-independent responses. In response to flavivirus infection in neurons, promotes a cell death-independent pathway that restricts viral replication: together with ZBP1, promotes a death-independent transcriptional program that modifies the cellular metabolism via up-regulation expression of the enzyme ACOD1/IRG1 and production of the metabolite itaconate. Itaconate inhibits the activity of succinate dehydrogenase, generating a metabolic state in neurons that suppresses replication of viral genomes. RIPK3 binds to and enhances the activity of three metabolic enzymes: GLUL, GLUD1, and PYGL. These metabolic enzymes may eventually stimulate the tricarboxylic acid cycle and oxidative phosphorylation, which could result in enhanced ROS production. The sequence is that of Receptor-interacting serine/threonine-protein kinase 3 from Mus musculus (Mouse).